The chain runs to 435 residues: NADH-quinone oxidoreductase subunit D (435 aa).

The protein belongs to the complex I 49 kDa subunit family. As to quaternary structure, NDH-1 is composed of 14 different subunits. Subunits NuoB, C, D, E, F, and G constitute the peripheral sector of the complex.

Its subcellular location is the cell inner membrane. The catalysed reaction is a quinone + NADH + 5 H(+)(in) = a quinol + NAD(+) + 4 H(+)(out). Its function is as follows. NDH-1 shuttles electrons from NADH, via FMN and iron-sulfur (Fe-S) centers, to quinones in the respiratory chain. The immediate electron acceptor for the enzyme in this species is believed to be ubiquinone. Couples the redox reaction to proton translocation (for every two electrons transferred, four hydrogen ions are translocated across the cytoplasmic membrane), and thus conserves the redox energy in a proton gradient. The polypeptide is NADH-quinone oxidoreductase subunit D (Xanthomonas campestris pv. campestris (strain 8004)).